Reading from the N-terminus, the 477-residue chain is V-type ATP synthase beta chain (477 aa).

The protein belongs to the ATPase alpha/beta chains family.

Produces ATP from ADP in the presence of a proton gradient across the membrane. The V-type beta chain is a regulatory subunit. This Anaeromyxobacter dehalogenans (strain 2CP-1 / ATCC BAA-258) protein is V-type ATP synthase beta chain.